The following is a 399-amino-acid chain: Elongation factor Tu 2 (399 aa).

The 200-residue stretch at 10 to 209 (KPHVNIGTIG…QVDGYIPEPE (200 aa)) folds into the tr-type G domain. Positions 19–26 (GHVDHGKT) are G1. 19–26 (GHVDHGKT) lines the GTP pocket. Position 26 (Thr26) interacts with Mg(2+). Residues 60 to 64 (GITIA) are G2. The tract at residues 81–84 (DCPG) is G3. GTP-binding positions include 81 to 85 (DCPGH) and 136 to 139 (NKAD). Residues 136 to 139 (NKAD) are G4. A G5 region spans residues 174–176 (SAL).

This sequence belongs to the TRAFAC class translation factor GTPase superfamily. Classic translation factor GTPase family. EF-Tu/EF-1A subfamily. Monomer.

The protein resides in the cytoplasm. It catalyses the reaction GTP + H2O = GDP + phosphate + H(+). In terms of biological role, GTP hydrolase that promotes the GTP-dependent binding of aminoacyl-tRNA to the A-site of ribosomes during protein biosynthesis. This chain is Elongation factor Tu 2, found in Syntrophotalea carbinolica (strain DSM 2380 / NBRC 103641 / GraBd1) (Pelobacter carbinolicus).